We begin with the raw amino-acid sequence, 364 residues long: MERSSREHSKYSKANTLNETYQMRMYKDDSTPDYCYSEISVGLSSSSPKMSLSDYFSAVSVTYGDEARLDEYKPLLYSDLLFAESYELDVDINLLVWQLLSSNQDSKSLCVNVLRMLHTYSLGNAYMGGGIYHFSQGTNTETLSDIVDILRLIGRLAKIIIKTKFSQMELKCVQTHLIYYFTGKAYKSLSLSWDSKSILSTSNGYSTSEGLLDYYIRNKLDLFKALYSKNLVYGGNYYLIYQVLVYYYIITNGRYSTGFNLRKDSIKHYNIPNDNPKMCNSILPRKPNLSMMYIRAILIMVMIKDYSPIKLVPLYLNALEIEDPAYMSSRITDGGIRMETDNMASTPDISRVLPAYFNGVKNDQ.

This is an uncharacterized protein from Saccharum officinarum (Sugarcane).